The sequence spans 183 residues: Phosphinothricin N-acetyltransferase (183 aa).

Positions 8-173 constitute an N-acetyltransferase domain; that stretch reads ADIRRATEAD…WQLDFSLPVP (166 aa). Residues 91–93, 99–104, and N130 contribute to the acetyl-CoA site; these read VYV and RTGLGS.

Belongs to the acetyltransferase family. PAT/BAR subfamily.

The enzyme catalyses phosphinothricin + acetyl-CoA = N-acetylphosphinothricin + CoA + H(+). Its function is as follows. Inactivates phosphinothricin (PPT) by transfer of an acetyl group from acetyl CoA. Can also acetylate demethylphosphinothricin but not PTT or glutamate. This enzyme is an effector of phosphinothricin tripeptide (PTT or bialaphos) resistance. This chain is Phosphinothricin N-acetyltransferase, found in Streptomyces hygroscopicus.